The chain runs to 241 residues: Accessory protein p30II (241 aa).

2 short sequence motifs (nuclear localization signal) span residues 73-78 (RRCRSR) and 91-98 (GPRRSRPR). Composition is skewed to low complexity over residues 79–100 (CVSP…PRLS) and 107–136 (PSST…TSRS). The interval 79–151 (CVSPRGGAFS…GKHRNSPADT (73 aa)) is disordered. Positions 175-184 (LRVWRLCTRR) match the Mitochondrial targeting signal motif.

This sequence belongs to the HTLV-1 accessory protein p30II family. In terms of assembly, p30II binds to the KIX domains of CREBBP and EP300.

It is found in the host nucleus. The protein localises to the host nucleolus. It localises to the host mitochondrion inner membrane. Functionally, p30II is a multifunctional regulator that sequesters EP300/CREBBP and down-regulates CREB-responsive element (CRE) and Tax-responsive element (TRE) mediated transcription. Specifically binds and represses tax/rex mRNA nuclear export. Since Tax and Rex are positive regulators of viral gene expression, their inhibition by p30II reduces virion production, and allows the virus to escape the host immune surveillance and persist latently in an immune-competent host. P13II increases mitochondrial permeability to monovalent cations, producing a rapid, membrane potential-dependent influx of potassium. This could involve a channel-forming activity. Interferes with cell proliferation and transformation and promotes apoptosis induced by ceramide and Fas ligand, probably using the Ras signaling. The polypeptide is Accessory protein p30II (Human T-cell leukemia virus 1 (strain Japan ATK-1 subtype A) (HTLV-1)).